Reading from the N-terminus, the 567-residue chain is Microtubule-associated protein 70-1 (567 aa).

Residues 38-341 are a coiled coil; the sequence is VRVELTRLEN…AARSEAQLKD (304 aa). Residues 220–440 form a required for targeting to microtubules region; the sequence is ILDRMHRQKV…SGMNVSTDSS (221 aa). 2 disordered regions span residues 425–457 and 534–567; these read KGHV…EFTS and LEKE…ARNM. A compositionally biased stretch (basic and acidic residues) spans 440-453; it reads SEDKESNNSDEKAN. Residues 516-545 are a coiled coil; the sequence is KKRRMEVAAMEKEMAALRLEKEQDNKAKRF.

This sequence belongs to the MAP70 family.

Its subcellular location is the cytoplasm. The protein resides in the cytoskeleton. Its function is as follows. Plant-specific protein that interact with microtubules. The polypeptide is Microtubule-associated protein 70-1 (MAP70.1) (Oryza sativa subsp. japonica (Rice)).